A 383-amino-acid polypeptide reads, in one-letter code: Queuine tRNA-ribosyltransferase (383 aa).

Catalysis depends on Asp90, which acts as the Proton acceptor. Substrate contacts are provided by residues 90 to 94, Asp144, Gln193, and Gly227; that span reads DSGGF. An RNA binding region spans residues 258 to 264; the sequence is GVGTPED. Residue Asp277 is the Nucleophile of the active site. Residues 282 to 286 are RNA binding; important for wobble base 34 recognition; sequence TRNAR. 4 residues coordinate Zn(2+): Cys315, Cys317, Cys320, and His346.

The protein belongs to the queuine tRNA-ribosyltransferase family. In terms of assembly, homodimer. Within each dimer, one monomer is responsible for RNA recognition and catalysis, while the other monomer binds to the replacement base PreQ1. Requires Zn(2+) as cofactor.

It carries out the reaction 7-aminomethyl-7-carbaguanine + guanosine(34) in tRNA = 7-aminomethyl-7-carbaguanosine(34) in tRNA + guanine. Its pathway is tRNA modification; tRNA-queuosine biosynthesis. In terms of biological role, catalyzes the base-exchange of a guanine (G) residue with the queuine precursor 7-aminomethyl-7-deazaguanine (PreQ1) at position 34 (anticodon wobble position) in tRNAs with GU(N) anticodons (tRNA-Asp, -Asn, -His and -Tyr). Catalysis occurs through a double-displacement mechanism. The nucleophile active site attacks the C1' of nucleotide 34 to detach the guanine base from the RNA, forming a covalent enzyme-RNA intermediate. The proton acceptor active site deprotonates the incoming PreQ1, allowing a nucleophilic attack on the C1' of the ribose to form the product. After dissociation, two additional enzymatic reactions on the tRNA convert PreQ1 to queuine (Q), resulting in the hypermodified nucleoside queuosine (7-(((4,5-cis-dihydroxy-2-cyclopenten-1-yl)amino)methyl)-7-deazaguanosine). In Ralstonia pickettii (strain 12J), this protein is Queuine tRNA-ribosyltransferase.